Consider the following 174-residue polypeptide: Shikimate kinase (174 aa).

Residue 14 to 19 (GAGKST) coordinates ATP. S18 contributes to the Mg(2+) binding site. The substrate site is built by D36, R60, and G82. Residue R120 participates in ATP binding. Residue R139 coordinates substrate. Q156 contributes to the ATP binding site.

Belongs to the shikimate kinase family. Monomer. Mg(2+) is required as a cofactor.

Its subcellular location is the cytoplasm. The enzyme catalyses shikimate + ATP = 3-phosphoshikimate + ADP + H(+). The protein operates within metabolic intermediate biosynthesis; chorismate biosynthesis; chorismate from D-erythrose 4-phosphate and phosphoenolpyruvate: step 5/7. Catalyzes the specific phosphorylation of the 3-hydroxyl group of shikimic acid using ATP as a cosubstrate. The protein is Shikimate kinase of Vibrio cholerae serotype O1 (strain ATCC 39541 / Classical Ogawa 395 / O395).